The primary structure comprises 632 residues: Phospholipid:diacylglycerol acyltransferase (632 aa).

A compositionally biased stretch (basic residues) spans methionine 1 to glutamate 15. Residues methionine 1–lysine 47 are disordered. The Cytoplasmic segment spans residues methionine 1–arginine 56. A compositionally biased stretch (polar residues) spans leucine 32 to asparagine 46. A helical transmembrane segment spans residues leucine 57–aspartate 77. At aspartate 78–asparagine 632 the chain is on the lumenal side. Aspartate 136 is a substrate binding site. Serine 293 acts as the Acyl-ester intermediate in catalysis. Methionine 294 serves as a coordination point for substrate. Active-site charge relay system residues include aspartate 535 and histidine 586.

This sequence belongs to the AB hydrolase superfamily. Lipase family.

It is found in the endoplasmic reticulum membrane. The enzyme catalyses a glycerophospholipid + a 1,2-diacyl-sn-glycerol = a monoacylglycerophospholipid + a triacyl-sn-glycerol. The protein operates within glycerolipid metabolism; triacylglycerol biosynthesis. Its function is as follows. Catalyzes triacylglycerol (TAG) formation by an acyl-CoA independent pathway. The enzyme specifically transfers acyl groups from the sn-2 position of a phospholipid to diacylglycerol (DAG), thus forming an sn-1-lysophospholipid. Plays a major role in triacylglycerol formation at log phase. Involved in lipid particle synthesis from the endoplasmic reticulum, promoting localized TAG production at discrete ER subdomains. This chain is Phospholipid:diacylglycerol acyltransferase (plh1), found in Schizosaccharomyces pombe (strain 972 / ATCC 24843) (Fission yeast).